Consider the following 215-residue polypeptide: MRGRAGETTMTAALQELAAHIEMKRPDCVISTEIAHDELTVVATPNSIVGLVAFLKTDATCKFSTLIDITAVDYPERAQRFDVVYHFLSMYQNHRIRIRVPVREDDIVPSIISEHPSANWFEREVFDMFGILFSGHPDLRRILTDYGFRGYPLRKDFPTTGYTEVRYDEEKKRVVYEPVNLVQEYRQFDFMSPWEGAEYILPGDEKTDDKAEAKG.

It belongs to the complex I 30 kDa subunit family. In terms of assembly, NDH-1 is composed of 14 different subunits. Subunits NuoB, C, D, E, F, and G constitute the peripheral sector of the complex.

The protein localises to the cell inner membrane. The enzyme catalyses a quinone + NADH + 5 H(+)(in) = a quinol + NAD(+) + 4 H(+)(out). Its function is as follows. NDH-1 shuttles electrons from NADH, via FMN and iron-sulfur (Fe-S) centers, to quinones in the respiratory chain. The immediate electron acceptor for the enzyme in this species is believed to be ubiquinone. Couples the redox reaction to proton translocation (for every two electrons transferred, four hydrogen ions are translocated across the cytoplasmic membrane), and thus conserves the redox energy in a proton gradient. This is NADH-quinone oxidoreductase subunit C from Dinoroseobacter shibae (strain DSM 16493 / NCIMB 14021 / DFL 12).